Consider the following 894-residue polypeptide: Probable ion channel SYM8 (894 aa).

Residues 1–124 (MAKSNEEPNS…PPSLPIAITK (124 aa)) are disordered. 3 stretches are compositionally biased toward polar residues: residues 7 to 16 (EPNSNLNTNK), 24 to 33 (TLAQQPSLNL), and 44 to 63 (IGNS…QRNY). A run of 4 helical transmembrane segments spans residues 134–154 (SPIF…SAFL), 204–224 (TISL…YKYI), 267–287 (LALL…LYAV), and 319–339 (IVSV…LGLV). RCK N-terminal domains follow at residues 360 to 501 (RNHV…ETVV) and 620 to 769 (PEKI…DKSI). Positions 390-415 (VIVVLAEKEKEEMEMDIAKLEFDFMG) form a coiled coil.

It belongs to the castor/pollux (TC 1.A.1.23) family. As to quaternary structure, homotetramer.

It localises to the nucleus membrane. Required for both rhizobial and mycorrhizal symbiosis. Involved in Nod-factor-induced calcium spiking. May induce a change in membrane polarization that activates the opening of a calcium channel required for calcium spiking. Might be calcium gated. The polypeptide is Probable ion channel SYM8 (SYM8) (Pisum sativum (Garden pea)).